The primary structure comprises 199 residues: Dephospho-CoA kinase (199 aa).

In terms of domain architecture, DPCK spans 3 to 199 (KVGLTGGICS…DLLEFFTLYQ (197 aa)). 11–16 (CSGKST) contacts ATP.

It belongs to the CoaE family.

The protein resides in the cytoplasm. The enzyme catalyses 3'-dephospho-CoA + ATP = ADP + CoA + H(+). Its pathway is cofactor biosynthesis; coenzyme A biosynthesis; CoA from (R)-pantothenate: step 5/5. Catalyzes the phosphorylation of the 3'-hydroxyl group of dephosphocoenzyme A to form coenzyme A. This is Dephospho-CoA kinase from Clostridium perfringens (strain 13 / Type A).